A 546-amino-acid polypeptide reads, in one-letter code: Chaperonin GroEL (546 aa).

Residues T29–P32, K50, D86–T90, G414, N477–A479, and D493 contribute to the ATP site.

Belongs to the chaperonin (HSP60) family. As to quaternary structure, forms a cylinder of 14 subunits composed of two heptameric rings stacked back-to-back. Interacts with the co-chaperonin GroES.

Its subcellular location is the cytoplasm. The catalysed reaction is ATP + H2O + a folded polypeptide = ADP + phosphate + an unfolded polypeptide.. Together with its co-chaperonin GroES, plays an essential role in assisting protein folding. The GroEL-GroES system forms a nano-cage that allows encapsulation of the non-native substrate proteins and provides a physical environment optimized to promote and accelerate protein folding. This chain is Chaperonin GroEL, found in Geobacter metallireducens (strain ATCC 53774 / DSM 7210 / GS-15).